A 932-amino-acid polypeptide reads, in one-letter code: Isoleucine--tRNA ligase (932 aa).

The 'HIGH' region motif lies at 58 to 68; the sequence is PYANGNLHLGH. E567 serves as a coordination point for L-isoleucyl-5'-AMP. Residues 608–612 carry the 'KMSKS' region motif; that stretch reads KMSKS. K611 is an ATP binding site. The Zn(2+) site is built by C895, C898, C915, and C918.

This sequence belongs to the class-I aminoacyl-tRNA synthetase family. IleS type 1 subfamily. As to quaternary structure, monomer. Zn(2+) is required as a cofactor.

Its subcellular location is the cytoplasm. The enzyme catalyses tRNA(Ile) + L-isoleucine + ATP = L-isoleucyl-tRNA(Ile) + AMP + diphosphate. Functionally, catalyzes the attachment of isoleucine to tRNA(Ile). As IleRS can inadvertently accommodate and process structurally similar amino acids such as valine, to avoid such errors it has two additional distinct tRNA(Ile)-dependent editing activities. One activity is designated as 'pretransfer' editing and involves the hydrolysis of activated Val-AMP. The other activity is designated 'posttransfer' editing and involves deacylation of mischarged Val-tRNA(Ile). This is Isoleucine--tRNA ligase from Azoarcus sp. (strain BH72).